Consider the following 351-residue polypeptide: Phosphate acyltransferase (351 aa).

It belongs to the PlsX family. In terms of assembly, homodimer. Probably interacts with PlsY.

The protein resides in the cytoplasm. The enzyme catalyses a fatty acyl-[ACP] + phosphate = an acyl phosphate + holo-[ACP]. The protein operates within lipid metabolism; phospholipid metabolism. In terms of biological role, catalyzes the reversible formation of acyl-phosphate (acyl-PO(4)) from acyl-[acyl-carrier-protein] (acyl-ACP). This enzyme utilizes acyl-ACP as fatty acyl donor, but not acyl-CoA. In Maricaulis maris (strain MCS10) (Caulobacter maris), this protein is Phosphate acyltransferase.